A 391-amino-acid chain; its full sequence is Putative 1-acyl-sn-glycerol-3-phosphate acyltransferase acl-12 (391 aa).

Transmembrane regions (helical) follow at residues 47-67 (FFFMTAWVVPVACVITVSLLF) and 84-104 (LCAMVNAHWNAVSVFVGATVT). The HXXXXD motif motif lies at 124–129 (HLGLLD).

The protein belongs to the 1-acyl-sn-glycerol-3-phosphate acyltransferase family.

It localises to the membrane. It carries out the reaction a 1-acyl-sn-glycero-3-phosphate + an acyl-CoA = a 1,2-diacyl-sn-glycero-3-phosphate + CoA. Its pathway is phospholipid metabolism; CDP-diacylglycerol biosynthesis; CDP-diacylglycerol from sn-glycerol 3-phosphate: step 2/3. Its function is as follows. Converts lysophosphatidic acid (LPA) into phosphatidic acid by incorporating an acyl moiety at the sn-2 position of the glycerol backbone. The polypeptide is Putative 1-acyl-sn-glycerol-3-phosphate acyltransferase acl-12 (acl-12) (Caenorhabditis elegans).